Here is a 471-residue protein sequence, read N- to C-terminus: tRNA(Ile)-lysidine synthase (471 aa).

ATP is bound at residue 27–32 (SGGPDS).

This sequence belongs to the tRNA(Ile)-lysidine synthase family.

The protein resides in the cytoplasm. The catalysed reaction is cytidine(34) in tRNA(Ile2) + L-lysine + ATP = lysidine(34) in tRNA(Ile2) + AMP + diphosphate + H(+). In terms of biological role, ligates lysine onto the cytidine present at position 34 of the AUA codon-specific tRNA(Ile) that contains the anticodon CAU, in an ATP-dependent manner. Cytidine is converted to lysidine, thus changing the amino acid specificity of the tRNA from methionine to isoleucine. This is tRNA(Ile)-lysidine synthase from Dehalococcoides mccartyi (strain CBDB1).